The chain runs to 620 residues: Glutathione-regulated potassium-efflux system protein KefC (620 aa).

The next 12 helical transmembrane spans lie at 4–24, 26–46, 54–74, 90–110, 114–134, 149–169, 178–198, 218–238, 270–290, 294–314, 327–347, and 359–379; these read HTLI…PIAV, LGLG…PWGL, SILH…GLEL, GALQ…LLGL, VAEL…MQAM, FAVL…IPLL, MGAF…VVLL, VFSA…EEVG, GLLL…GTLL, LRIV…LWLI, WFAV…GAAQ, and SLTL…VILN. The RCK N-terminal domain occupies 399–518; it reads QPRVIIAGFG…AGVEKPERET (120 aa). Positions 597 to 620 are disordered; the sequence is GWQGTEEGKHTGNMADEPETKPSS.

The protein belongs to the monovalent cation:proton antiporter 2 (CPA2) transporter (TC 2.A.37) family. KefC subfamily. As to quaternary structure, homodimer. Interacts with the regulatory subunit KefF.

The protein resides in the cell inner membrane. Functionally, pore-forming subunit of a potassium efflux system that confers protection against electrophiles. Catalyzes K(+)/H(+) antiport. This Escherichia coli (strain K12 / MC4100 / BW2952) protein is Glutathione-regulated potassium-efflux system protein KefC.